The sequence spans 675 residues: TOM1-like protein 9 (675 aa).

One can recognise a VHS domain in the interval 9–138 (ATSEMLIGPD…ELLRAGAVFP (130 aa)). Disordered stretches follow at residues 144-181 (SAPVFTPPQTQPLTSYPPNLRNAGPGNDVPEPSAEPEF), 270-322 (LPGT…QLAL), 371-524 (FSDN…YAQM), 542-561 (QNGVYMPNQPNQALGSGYQP), and 622-675 (RDQT…AGTM). A GAT domain is found at 180–268 (EFPTLSLSEI…VLTNYEAIAS (89 aa)). Composition is skewed to polar residues over residues 299 to 317 (GDSSNQANGATSSSGNGVL) and 372 to 435 (SDNT…GQGV). Low complexity predominate over residues 436-451 (SSPWSSQPAQQPVQPS). Composition is skewed to polar residues over residues 470–481 (QDYSPSAESGSP) and 488–524 (PTQTAFTHAQPVNNNNPYPQIPQTGPPVNNNSPYAQM). The segment covering 646–661 (NKPEDKLFGDLVDISK) has biased composition (basic and acidic residues).

Belongs to the TOM1 family. In terms of assembly, interacts with ELC/VPS23A and ELCL/VPS23B. As to expression, ubiquitously expressed.

It localises to the cytoplasm. The protein localises to the membrane. Its function is as follows. Might contribute to the loading of the ESCRT machinery. This Arabidopsis thaliana (Mouse-ear cress) protein is TOM1-like protein 9.